We begin with the raw amino-acid sequence, 854 residues long: Protein mono-ADP-ribosyltransferase PARP8 (854 aa).

2 disordered regions span residues Asn113–Tyr138 and Ser291–Gly310. Positions Val123–Glu135 are enriched in acidic residues. 4 positions are modified to ADP-ribosylcysteine: Cys332, Cys367, Cys376, and Cys395. The 228-residue stretch at Glu617 to Leu844 folds into the PARP catalytic domain. Residues Gln750–Ser777 are disordered. The segment covering Ser760–Ser777 has biased composition (low complexity).

This sequence belongs to the ARTD/PARP family. In terms of processing, auto-mono-ADP-ribosylated.

The catalysed reaction is L-cysteinyl-[protein] + NAD(+) = S-(ADP-D-ribosyl)-L-cysteinyl-[protein] + nicotinamide + H(+). Functionally, mono-ADP-ribosyltransferase that mediates mono-ADP-ribosylation of target proteins. The polypeptide is Protein mono-ADP-ribosyltransferase PARP8 (Homo sapiens (Human)).